We begin with the raw amino-acid sequence, 156 residues long: Ribosomal RNA large subunit methyltransferase H (156 aa).

S-adenosyl-L-methionine-binding positions include leucine 73, glycine 104, and 123–128; that span reads ISSMTL.

Belongs to the RNA methyltransferase RlmH family. In terms of assembly, homodimer.

It is found in the cytoplasm. The enzyme catalyses pseudouridine(1915) in 23S rRNA + S-adenosyl-L-methionine = N(3)-methylpseudouridine(1915) in 23S rRNA + S-adenosyl-L-homocysteine + H(+). Specifically methylates the pseudouridine at position 1915 (m3Psi1915) in 23S rRNA. The protein is Ribosomal RNA large subunit methyltransferase H of Burkholderia multivorans (strain ATCC 17616 / 249).